Here is a 250-residue protein sequence, read N- to C-terminus: Kv channel-interacting protein 4 (250 aa).

Residues 2–44 (NVRRVESISAQLEEASSTGGFLYTQNSTKRSIKERLMKLLPCS) form a KIS region. Serine 17 and serine 56 each carry phosphoserine. The EF-hand 1; degenerate domain occupies 61-117 (LEMATVRHRPEALELLEAQSKFTKKELQILYRGFKNECPSGVVNEDTFKEIYSQFFP). EF-hand domains follow at residues 120 to 155 (DSTT…LLRG), 156 to 191 (TVQE…IYDM), and 204 to 239 (APRQ…DENI). Ca(2+)-binding residues include aspartate 133, aspartate 135, asparagine 137, aspartate 144, aspartate 169, asparagine 171, aspartate 173, tyrosine 175, glutamate 180, aspartate 217, asparagine 219, aspartate 221, and glutamate 228. The interval 237 to 250 (ENIMRSMQLFENVI) is interaction with KCND2.

It belongs to the recoverin family. As to quaternary structure, component of heteromultimeric potassium channels. Identified in potassium channel complexes containing KCND1, KCND2, KCND3, KCNIP1, KCNIP2, KCNIP3, KCNIP4, DPP6 and DPP10. Interacts with KCND2. Interacts with KCND3. Interacts with the C-terminus of PSEN2 and probably PSEN1.

It is found in the cell membrane. The protein localises to the cytoplasm. The protein resides in the peroxisome. Functionally, regulatory subunit of Kv4/D (Shal)-type voltage-gated rapidly inactivating A-type potassium channels. Modulates KCND2 channel density, inactivation kinetics and rate of recovery from inactivation in a calcium-dependent and isoform-specific manner. Modulates KCND3/Kv4.3 currents. Isoform 4 does not increase KCND2 expression at the cell membrane. Isoform 4 retains KCND3 in the endoplasmic reticulum and negatively regulates its expression at the cell membrane. This chain is Kv channel-interacting protein 4 (KCNIP4), found in Bos taurus (Bovine).